The sequence spans 398 residues: Phosphoglycerate kinase (398 aa).

Substrate contacts are provided by residues 21-23, R36, 59-62, R119, and R157; these read DFN and HLGR. ATP-binding positions include K208, G296, E327, and 354-357; that span reads GGDS.

It belongs to the phosphoglycerate kinase family. As to quaternary structure, monomer.

The protein localises to the cytoplasm. The enzyme catalyses (2R)-3-phosphoglycerate + ATP = (2R)-3-phospho-glyceroyl phosphate + ADP. It functions in the pathway carbohydrate degradation; glycolysis; pyruvate from D-glyceraldehyde 3-phosphate: step 2/5. The chain is Phosphoglycerate kinase from Lactococcus lactis subsp. cremoris (strain SK11).